The sequence spans 389 residues: MATKRDYYEILGLSKDSSVEDIKKTYRKLALQYHPDRNKEPGAEEKFKEISEAYAVLSDAEKRAQYDRFGHAGIDNQYSAEDIFRGADFGGFGDIFEMFFGGGRRGGPMGPRRGSDLQYDLYVTFEEAAFGVRKDIDIPRTERCSTCSGTGAKPGTSPKRCPNCGGTGQVRTTRSTLGMQFVSTTTCSACHGRGQVVESPCPTCSGAGRVRSRRKMSVNVPAGADSGMTLRLSGEGDAGEPGAPSGDLYIIVHVMEHKYFKRVDYDVISELPISFTQAALGADIMVDTLYGKVKMNIPSGTQTHSVFRLKDKGIQRLQGHGKGDQLVRVIIRTPTKLTQEQKDLLHQFEYLSNGKKPEAEERSRSDKQKSEKPRKSKGLFEKVKDAFES.

The 65-residue stretch at 6–70 (DYYEILGLSK…EKRAQYDRFG (65 aa)) folds into the J domain. A CR-type zinc finger spans residues 131–213 (GVRKDIDIPR…CSGAGRVRSR (83 aa)). Zn(2+) contacts are provided by C144, C147, C161, C164, C187, C190, C201, and C204. CXXCXGXG motif repeat units lie at residues 144 to 151 (CSTCSGTG), 161 to 168 (CPNCGGTG), 187 to 194 (CSACHGRG), and 201 to 208 (CPTCSGAG). The interval 145-167 (STCSGTGAKPGTSPKRCPNCGGT) is disordered. Residues 351-389 (LSNGKKPEAEERSRSDKQKSEKPRKSKGLFEKVKDAFES) are disordered. A compositionally biased stretch (basic and acidic residues) spans 355 to 389 (KKPEAEERSRSDKQKSEKPRKSKGLFEKVKDAFES).

The protein belongs to the DnaJ family. Homodimer. Zn(2+) serves as cofactor.

Its subcellular location is the cytoplasm. Its function is as follows. Participates actively in the response to hyperosmotic and heat shock by preventing the aggregation of stress-denatured proteins and by disaggregating proteins, also in an autonomous, DnaK-independent fashion. Unfolded proteins bind initially to DnaJ; upon interaction with the DnaJ-bound protein, DnaK hydrolyzes its bound ATP, resulting in the formation of a stable complex. GrpE releases ADP from DnaK; ATP binding to DnaK triggers the release of the substrate protein, thus completing the reaction cycle. Several rounds of ATP-dependent interactions between DnaJ, DnaK and GrpE are required for fully efficient folding. Also involved, together with DnaK and GrpE, in the DNA replication of plasmids through activation of initiation proteins. The polypeptide is Chaperone protein DnaJ (Methanosarcina mazei (strain ATCC BAA-159 / DSM 3647 / Goe1 / Go1 / JCM 11833 / OCM 88) (Methanosarcina frisia)).